Consider the following 327-residue polypeptide: Serine/threonine-protein phosphatase PP2A catalytic subunit (327 aa).

D75, H77, D103, and N135 together coordinate Mn(2+). The active-site Proton donor is the H136. Mn(2+) contacts are provided by H185 and H259. L327 is modified (leucine methyl ester).

This sequence belongs to the PPP phosphatase family. PP-2A subfamily. Mn(2+) serves as cofactor.

The enzyme catalyses O-phospho-L-seryl-[protein] + H2O = L-seryl-[protein] + phosphate. It carries out the reaction O-phospho-L-threonyl-[protein] + H2O = L-threonyl-[protein] + phosphate. The protein is Serine/threonine-protein phosphatase PP2A catalytic subunit (pph-1) of Neurospora crassa (strain ATCC 24698 / 74-OR23-1A / CBS 708.71 / DSM 1257 / FGSC 987).